Here is a 78-residue protein sequence, read N- to C-terminus: Small ribosomal subunit protein bS18 (78 aa).

The protein belongs to the bacterial ribosomal protein bS18 family. As to quaternary structure, part of the 30S ribosomal subunit. Forms a tight heterodimer with protein bS6.

In terms of biological role, binds as a heterodimer with protein bS6 to the central domain of the 16S rRNA, where it helps stabilize the platform of the 30S subunit. The protein is Small ribosomal subunit protein bS18 of Thermobifida fusca (strain YX).